The chain runs to 463 residues: Adenosylhomocysteinase (463 aa).

Substrate contacts are provided by Thr-54, Asp-129, and Glu-189. Thr-190–Thr-192 contributes to the NAD(+) binding site. Substrate contacts are provided by Lys-219 and Asp-223. NAD(+) is bound by residues Asn-224, Gly-253–Gly-258, Glu-276, Asn-311, Ile-332–His-334, and Asn-377.

This sequence belongs to the adenosylhomocysteinase family. NAD(+) is required as a cofactor.

Its subcellular location is the cytoplasm. It catalyses the reaction S-adenosyl-L-homocysteine + H2O = L-homocysteine + adenosine. It functions in the pathway amino-acid biosynthesis; L-homocysteine biosynthesis; L-homocysteine from S-adenosyl-L-homocysteine: step 1/1. May play a key role in the regulation of the intracellular concentration of adenosylhomocysteine. This chain is Adenosylhomocysteinase, found in Caulobacter vibrioides (strain ATCC 19089 / CIP 103742 / CB 15) (Caulobacter crescentus).